Reading from the N-terminus, the 178-residue chain is Probable DNA-directed RNA polymerase subunit delta (178 aa).

Positions 14–81 constitute an HTH HARE-type domain; sequence KSFIDMAYTL…GENLWGLRDW (68 aa). The tract at residues 114-178 is disordered; it reads LGDDDADEDD…AFEDAEDFND (65 aa). Over residues 116–178 the composition is skewed to acidic residues; the sequence is DDDADEDDDI…AFEDAEDFND (63 aa).

Belongs to the RpoE family. RNAP is composed of a core of 2 alpha, a beta and a beta' subunits. The core is associated with a delta subunit and one of several sigma factors.

Functionally, participates in both the initiation and recycling phases of transcription. In the presence of the delta subunit, RNAP displays an increased specificity of transcription, a decreased affinity for nucleic acids, and an increased efficiency of RNA synthesis because of enhanced recycling. The polypeptide is Probable DNA-directed RNA polymerase subunit delta (Staphylococcus epidermidis (strain ATCC 35984 / DSM 28319 / BCRC 17069 / CCUG 31568 / BM 3577 / RP62A)).